A 313-amino-acid polypeptide reads, in one-letter code: DNA-directed RNA polymerase subunit alpha (313 aa).

The alpha N-terminal domain (alpha-NTD) stretch occupies residues 1–226; it reads MLEIEKPKIE…EHLQLFVNLN (226 aa). Residues 243–313 are alpha C-terminal domain (alpha-CTD); that stretch reads KEKLAEMPIE…MGLSLRKEEE (71 aa).

Belongs to the RNA polymerase alpha chain family. As to quaternary structure, homodimer. The RNAP catalytic core consists of 2 alpha, 1 beta, 1 beta' and 1 omega subunit. When a sigma factor is associated with the core the holoenzyme is formed, which can initiate transcription.

The catalysed reaction is RNA(n) + a ribonucleoside 5'-triphosphate = RNA(n+1) + diphosphate. In terms of biological role, DNA-dependent RNA polymerase catalyzes the transcription of DNA into RNA using the four ribonucleoside triphosphates as substrates. The sequence is that of DNA-directed RNA polymerase subunit alpha from Carboxydothermus hydrogenoformans (strain ATCC BAA-161 / DSM 6008 / Z-2901).